The sequence spans 296 residues: F-box/LRR-repeat protein 15 (296 aa).

In terms of domain architecture, F-box spans 16–63; the sequence is LLDLPWEDVLVSHVFCHLPLRLLVSLQRVSKSFRSLIQVYLDNCRTFD. LRR repeat units follow at residues 138 to 159, 164 to 185, 190 to 211, 216 to 237, and 242 to 263; these read RLQHLSLAHCEWVDSLALRSLA, MLRSLDLTACRQLKDPAVCYLA, ELRALSVAVNANITDTAVEEVA, EMERLDLTGCLRVRNEAIRTLA, and KLQSLKVNHCHNVTESSLGVLR.

This sequence belongs to the FBXL15 family. As to quaternary structure, part of the SCF (SKP1-CUL1-F-box) E3 ubiquitin-protein ligase complex SCF(FBXL15).

It is found in the cytoplasm. Its pathway is protein modification; protein ubiquitination. Functionally, substrate recognition component of a SCF (SKP1-CUL1-F-box protein) E3 ubiquitin-protein ligase complex which mediates the ubiquitination and subsequent proteasomal degradation of target proteins. Acts as a positive regulator of the BMP signaling pathway. Required for dorsal/ventral pattern formation. In Danio rerio (Zebrafish), this protein is F-box/LRR-repeat protein 15 (fbxl15).